Consider the following 344-residue polypeptide: Glycerol-3-phosphate dehydrogenase [NAD(P)+] 2 (344 aa).

5 residues coordinate NADPH: serine 12, tryptophan 13, arginine 33, arginine 34, and lysine 107. Lysine 107, glycine 138, and serine 140 together coordinate sn-glycerol 3-phosphate. Alanine 142 serves as a coordination point for NADPH. Positions 193, 246, 256, 257, and 258 each coordinate sn-glycerol 3-phosphate. The Proton acceptor role is filled by lysine 193. Residue arginine 257 participates in NADPH binding. NADPH-binding residues include valine 281 and glutamate 283.

It belongs to the NAD-dependent glycerol-3-phosphate dehydrogenase family.

Its subcellular location is the cytoplasm. It catalyses the reaction sn-glycerol 3-phosphate + NAD(+) = dihydroxyacetone phosphate + NADH + H(+). The catalysed reaction is sn-glycerol 3-phosphate + NADP(+) = dihydroxyacetone phosphate + NADPH + H(+). It participates in membrane lipid metabolism; glycerophospholipid metabolism. Its function is as follows. Catalyzes the reduction of the glycolytic intermediate dihydroxyacetone phosphate (DHAP) to sn-glycerol 3-phosphate (G3P), the key precursor for phospholipid synthesis. This is Glycerol-3-phosphate dehydrogenase [NAD(P)+] 2 from Salinibacter ruber (strain DSM 13855 / M31).